Reading from the N-terminus, the 114-residue chain is Fumarate reductase subunit D (114 aa).

Helical transmembrane passes span 24–44 (ISAL…PLGI), 49–69 (GIIA…LTIF), and 94–114 (LIFY…VASI).

The protein belongs to the FrdD family. As to quaternary structure, part of an enzyme complex containing four subunits: a flavoprotein (FrdA), an iron-sulfur protein (FrdB), and two hydrophobic anchor proteins (FrdC and FrdD).

It is found in the cell inner membrane. Functionally, anchors the catalytic components of the fumarate reductase complex to the cell membrane, binds quinones. This chain is Fumarate reductase subunit D, found in Actinobacillus succinogenes (strain ATCC 55618 / DSM 22257 / CCUG 43843 / 130Z).